Consider the following 193-residue polypeptide: MAAEPVEDNCINFVAMKFIDNTLYFIAEDDENLESDYFGKLESKLSVIRNLNDQVLFIDQGNRPLFEDMTDSDCRDNAPRTIFIISMYKDSQPRGMAVTISVKCEKISTLSCENKIISFKEMNPPDNIKDTKSDIIFFQRSVPGHDNKMQFESSSYEGYFLACEKERDLFKLILKKEDELGDRSIMFTVQNED.

A propeptide spanning residues 1 to 36 (MAAEPVEDNCINFVAMKFIDNTLYFIAEDDENLESD) is cleaved from the precursor.

Belongs to the IL-1 family. Forms a ternary complex with ligand-binding receptor subunit IL18R1 and signaling receptor subunit IL18RAP at the plasma membrane. Mature IL18 first binds to IL18R1 forming a low affinity binary complex, which then interacts with IL18RAP to form a high affinity ternary complex that signals inside the cell. Interacts with cargo receptor TMED10; the interaction mediates the translocation from the cytoplasm into the ERGIC (endoplasmic reticulum-Golgi intermediate compartment) and thereby secretion. The pro-IL-18 precursor is processed by CASP1, CASP4 or CASP5 to yield its mature, active form. The pro-IL-18 precursor features autoinhibitory interactions between the propeptide and the post-cleavage-site region, preventing recognition by the IL18R1 receptor. Processing by CASP1, CASP4 or CASP5 induces conformational changes to generate critical receptor-binding sites. The mature form is then secreted and released in the extracellular milieu by passing through the gasdermin-D (GSDMD) pore. In contrast, cleavage by CASP3 inactivates IL18. In terms of tissue distribution, expressed in ovarian carcinoma but undetectable in normal ovarian epithelial cells. Resistant to proteolytic activation by caspase-1 and -4.

It localises to the cytoplasm. It is found in the cytosol. Its subcellular location is the secreted. Functionally, pro-inflammatory cytokine primarily involved in epithelial barrier repair, polarized T-helper 1 (Th1) cell and natural killer (NK) cell immune responses. Upon binding to IL18R1 and IL18RAP, forms a signaling ternary complex which activates NF-kappa-B, triggering synthesis of inflammatory mediators. Synergizes with IL12/interleukin-12 to induce IFNG synthesis from T-helper 1 (Th1) cells and natural killer (NK) cells. Involved in transduction of inflammation downstream of pyroptosis: its mature form is specifically released in the extracellular milieu by passing through the gasdermin-D (GSDMD) pore. The sequence is that of Interleukin-18 from Homo sapiens (Human).